The chain runs to 454 residues: Kynurenine--oxoglutarate transaminase 3 (454 aa).

Substrate is bound at residue Gly71. At Lys116 the chain carries N6-acetyllysine; alternate. An N6-succinyllysine; alternate modification is found at Lys116. A substrate-binding site is contributed by Asn218. Lys280 carries the N6-(pyridoxal phosphate)lysine modification. Arg429 contacts substrate.

It belongs to the class-I pyridoxal-phosphate-dependent aminotransferase family. As to quaternary structure, homodimer. Pyridoxal 5'-phosphate serves as cofactor.

It catalyses the reaction L-kynurenine + 2-oxoglutarate = kynurenate + L-glutamate + H2O. It carries out the reaction L-kynurenine + glyoxylate = kynurenate + glycine + H2O. The enzyme catalyses 3-hydroxy-L-kynurenine + glyoxylate = xanthurenate + glycine + H2O. The catalysed reaction is an S-substituted L-cysteine + H2O = a thiol + pyruvate + NH4(+). Its pathway is amino-acid degradation; L-kynurenine degradation; kynurenate from L-kynurenine: step 1/2. Its function is as follows. Catalyzes the irreversible transamination of the L-tryptophan metabolite L-kynurenine to form kynurenic acid (KA), an intermediate in the tryptophan catabolic pathway which is also a broad spectrum antagonist of the three ionotropic excitatory amino acid receptors among others. May catalyze the beta-elimination of S-conjugates and Se-conjugates of L-(seleno)cysteine, resulting in the cleavage of the C-S or C-Se bond. Has transaminase activity towards L-kynurenine, tryptophan, phenylalanine, serine, cysteine, methionine, histidine, glutamine and asparagine with glyoxylate as an amino group acceptor (in vitro). Has lower activity with 2-oxoglutarate as amino group acceptor (in vitro). The chain is Kynurenine--oxoglutarate transaminase 3 from Rattus norvegicus (Rat).